Consider the following 309-residue polypeptide: Shugoshin (309 aa).

Residues 42–77 adopt a coiled-coil conformation; sequence NLLLKQQVVQCTKTIEKLRNENVALRQKNQELIDGT. 2 disordered regions span residues 165–195 and 210–309; these read FDNN…KGRR and EEAS…NTFF. The span at 167–178 shows a compositional bias: low complexity; it reads NNSSQSTSSIQN. Residues 184-193 are compositionally biased toward basic residues; it reads PRKKQSVGKG.

The protein belongs to the shugoshin family. In terms of tissue distribution, expressed in gonads.

It localises to the nucleus. The protein resides in the chromosome. Its subcellular location is the centromere. Functionally, component of cell cycle checkpoints, which ensures chromosome segregation during meiosis and mitosis. During meiotic prophase, it is involved in the regulation of the synapsis checkpoint, which monitors whether homologous chromosomes have synapsed, and the DNA damage response. Plays a central role in chromosome cohesion during cell division by preventing premature dissociation of cohesin complex after prophase, when most of cohesin complex dissociates from chromosomes arms. This Caenorhabditis elegans protein is Shugoshin.